The sequence spans 380 residues: Cytochrome b (380 aa).

4 helical membrane-spanning segments follow: residues 34-54, 78-99, 114-134, and 179-199; these read FGSL…LLAT, WLIR…YLHI, WNTG…GYVL, and FFAL…IHLA. Positions 84 and 98 each coordinate heme b. 2 residues coordinate heme b: H183 and H197. H202 contacts a ubiquinone. 4 consecutive transmembrane segments (helical) span residues 227 to 247, 289 to 309, 321 to 341, and 348 to 368; these read LKDI…ALFS, LGGV…PFLH, LSQI…WIGS, and FIII…ILFP.

This sequence belongs to the cytochrome b family. In terms of assembly, the cytochrome bc1 complex contains 11 subunits: 3 respiratory subunits (MT-CYB, CYC1 and UQCRFS1), 2 core proteins (UQCRC1 and UQCRC2) and 6 low-molecular weight proteins (UQCRH/QCR6, UQCRB/QCR7, UQCRQ/QCR8, UQCR10/QCR9, UQCR11/QCR10 and a cleavage product of UQCRFS1). This cytochrome bc1 complex then forms a dimer. Requires heme b as cofactor.

The protein localises to the mitochondrion inner membrane. Functionally, component of the ubiquinol-cytochrome c reductase complex (complex III or cytochrome b-c1 complex) that is part of the mitochondrial respiratory chain. The b-c1 complex mediates electron transfer from ubiquinol to cytochrome c. Contributes to the generation of a proton gradient across the mitochondrial membrane that is then used for ATP synthesis. This is Cytochrome b (MT-CYB) from Callipepla gambelii (Gambel's quail).